A 248-amino-acid chain; its full sequence is Transcription factor bHLH35 (248 aa).

Residues 37-54 (SGSYDSSSPDGAASSPAS) show a composition bias toward low complexity. The disordered stretch occupies residues 37–60 (SGSYDSSSPDGAASSPASKNIVSE). The region spanning 51–100 (SPASKNIVSERNRRQKLNQRLFALRSVVPNITKMDKASIIKDAISYIEGL) is the bHLH domain.

Homodimer. In terms of tissue distribution, expressed constitutively in roots, leaves, stems, and flowers.

It is found in the nucleus. This is Transcription factor bHLH35 (BHLH35) from Arabidopsis thaliana (Mouse-ear cress).